The following is a 277-amino-acid chain: Shikimate dehydrogenase (NADP(+)) (277 aa).

Shikimate is bound by residues 17–19 (SRS) and Thr-64. Residue Lys-68 is the Proton acceptor of the active site. Residues Asn-88 and Asp-103 each coordinate shikimate. NADP(+) is bound by residues 128 to 132 (GAGGS), 152 to 157 (NRTLDR), and Leu-217. Tyr-219 contributes to the shikimate binding site. NADP(+) is bound at residue Gly-240.

The protein belongs to the shikimate dehydrogenase family. In terms of assembly, homodimer.

The enzyme catalyses shikimate + NADP(+) = 3-dehydroshikimate + NADPH + H(+). It functions in the pathway metabolic intermediate biosynthesis; chorismate biosynthesis; chorismate from D-erythrose 4-phosphate and phosphoenolpyruvate: step 4/7. Its function is as follows. Involved in the biosynthesis of the chorismate, which leads to the biosynthesis of aromatic amino acids. Catalyzes the reversible NADPH linked reduction of 3-dehydroshikimate (DHSA) to yield shikimate (SA). The chain is Shikimate dehydrogenase (NADP(+)) from Rhodopseudomonas palustris (strain BisB18).